The primary structure comprises 102 residues: Small ribosomal subunit protein uS10 (102 aa).

This sequence belongs to the universal ribosomal protein uS10 family. Part of the 30S ribosomal subunit.

Involved in the binding of tRNA to the ribosomes. The sequence is that of Small ribosomal subunit protein uS10 from Pyrococcus horikoshii (strain ATCC 700860 / DSM 12428 / JCM 9974 / NBRC 100139 / OT-3).